Here is a 449-residue protein sequence, read N- to C-terminus: Tubulin alpha-8 chain (449 aa).

Positions 1-4 match the MREC motif motif; sequence MREC. GTP contacts are provided by glutamine 11, glutamate 71, serine 140, glycine 144, threonine 145, threonine 179, asparagine 206, and asparagine 228. Residue glutamate 71 coordinates Mg(2+). Glutamate 254 is a catalytic residue.

Belongs to the tubulin family. Dimer of alpha and beta chains. A typical microtubule is a hollow water-filled tube with an outer diameter of 25 nm and an inner diameter of 15 nM. Alpha-beta heterodimers associate head-to-tail to form protofilaments running lengthwise along the microtubule wall with the beta-tubulin subunit facing the microtubule plus end conferring a structural polarity. Microtubules usually have 13 protofilaments but different protofilament numbers can be found in some organisms and specialized cells. It depends on Mg(2+) as a cofactor. Some glutamate residues at the C-terminus are polyglycylated, resulting in polyglycine chains on the gamma-carboxyl group. Glycylation is mainly limited to tubulin incorporated into axonemes (cilia and flagella) whereas glutamylation is prevalent in neuronal cells, centrioles, axonemes, and the mitotic spindle. Both modifications can coexist on the same protein on adjacent residues, and lowering polyglycylation levels increases polyglutamylation, and reciprocally. Cilia and flagella glycylation is required for their stability and maintenance. Flagella glycylation controls sperm motility. Post-translationally, some glutamate residues at the C-terminus are polyglutamylated, resulting in polyglutamate chains on the gamma-carboxyl group. Polyglutamylation plays a key role in microtubule severing by spastin (SPAST). SPAST preferentially recognizes and acts on microtubules decorated with short polyglutamate tails: severing activity by SPAST increases as the number of glutamates per tubulin rises from one to eight, but decreases beyond this glutamylation threshold. Glutamylation is also involved in cilia motility. In terms of processing, the C-terminal phenylalanine residue is cleaved by MATCAP1/KIAA0895L. In terms of tissue distribution, expressed at highest levels in the testis, followed by skeletal and heart muscle. Expressed at low levels in the developing brain.

Its subcellular location is the cytoplasm. It is found in the cytoskeleton. It catalyses the reaction GTP + H2O = GDP + phosphate + H(+). In terms of biological role, tubulin is the major constituent of microtubules, a cylinder consisting of laterally associated linear protofilaments composed of alpha- and beta-tubulin heterodimers. Microtubules grow by the addition of GTP-tubulin dimers to the microtubule end, where a stabilizing cap forms. Below the cap, tubulin dimers are in GDP-bound state, owing to GTPase activity of alpha-tubulin. This Mus musculus (Mouse) protein is Tubulin alpha-8 chain (Tuba8).